We begin with the raw amino-acid sequence, 223 residues long: Alpha-S2-casein (223 aa).

The signal sequence occupies residues 1–15 (MKLFIFTCLLAVALA). Residues S23, S24, S25, S28, S46, S71, S72, and S73 each carry the phosphoserine modification. 2 consecutive repeats follow at residues 76 to 128 (FADI…TLGK) and 129 to 223 (EQIS…ERQA). Phosphoserine is present on residues S132, S147, and S155.

This sequence belongs to the alpha-casein family. In terms of tissue distribution, mammary gland specific. Secreted in milk.

The protein resides in the secreted. Important role in the capacity of milk to transport calcium phosphate. The chain is Alpha-S2-casein (CSN1S2) from Cavia porcellus (Guinea pig).